Consider the following 424-residue polypeptide: MTAIIDIIGREILDSRGNPTVEVDVHLEDGSFGRAAVPSGASTGAHEAVELRDGGTRYLGKGVERAVDAVNGEIFEAIGGLDAENQIQIDRTMIELDGTPNKSRLGANAILGVSLAVAKAAAEASGLPLYRYVGGPNAHLLPVPMMNIINGGAHADNPIDFQEFMIMPVGAETLKDAVRMGSEVFHTLKKQLAADGHNTNVGDEGGFAPGLASAPAALDFIMKSIEKAGYKPGEDMYVALDCASTEFFKDGKYVLEGEGRTLEPGAMAEYLAELAGKYPIISIEDGMAEDDWDGWKSLTDLVGNKCQLVGDDLFVTNSARLRDGIKMGVANSILVKVNQIGSLSETLDAVETAHKARYTAVMSHRSGETEDSTIADLAVATNCGQIKTGSLARSDRLAKYNQLIRIEEQLGPQAQYAGRSVLRG.

Residue Gln162 coordinates (2R)-2-phosphoglycerate. Catalysis depends on Glu204, which acts as the Proton donor. 3 residues coordinate Mg(2+): Asp241, Glu284, and Asp311. Positions 336, 365, 366, and 387 each coordinate (2R)-2-phosphoglycerate. The Proton acceptor role is filled by Lys336.

It belongs to the enolase family. Requires Mg(2+) as cofactor.

It is found in the cytoplasm. It localises to the secreted. Its subcellular location is the cell surface. The catalysed reaction is (2R)-2-phosphoglycerate = phosphoenolpyruvate + H2O. The protein operates within carbohydrate degradation; glycolysis; pyruvate from D-glyceraldehyde 3-phosphate: step 4/5. Functionally, catalyzes the reversible conversion of 2-phosphoglycerate (2-PG) into phosphoenolpyruvate (PEP). It is essential for the degradation of carbohydrates via glycolysis. In Rhizobium meliloti (strain 1021) (Ensifer meliloti), this protein is Enolase.